A 264-amino-acid chain; its full sequence is Transmembrane protein 270 (264 aa).

A run of 3 helical transmembrane segments spans residues His31 to Ala51, Leu74 to Trp94, and Leu133 to Trp153. The segment covering Ala227–Ser236 has biased composition (polar residues). The segment at Ala227–Glu264 is disordered. A compositionally biased stretch (pro residues) spans Pro254–Glu264.

In terms of tissue distribution, testis.

The protein resides in the membrane. The protein is Transmembrane protein 270 of Mus musculus (Mouse).